The sequence spans 162 residues: Xanthine-guanine phosphoribosyltransferase (162 aa).

Residues 43-44 (RG) and 94-102 (DDLVDTGTT) contribute to the 5-phospho-alpha-D-ribose 1-diphosphate site. Asp95 contributes to the Mg(2+) binding site. The guanine site is built by Asp98 and Ile141. Asp98 and Ile141 together coordinate xanthine. GMP contacts are provided by residues 98–102 (DTGTT) and 140–141 (WI).

Belongs to the purine/pyrimidine phosphoribosyltransferase family. XGPT subfamily. Homotetramer. Requires Mg(2+) as cofactor.

The protein localises to the cell inner membrane. The catalysed reaction is GMP + diphosphate = guanine + 5-phospho-alpha-D-ribose 1-diphosphate. It carries out the reaction XMP + diphosphate = xanthine + 5-phospho-alpha-D-ribose 1-diphosphate. The enzyme catalyses IMP + diphosphate = hypoxanthine + 5-phospho-alpha-D-ribose 1-diphosphate. The protein operates within purine metabolism; GMP biosynthesis via salvage pathway; GMP from guanine: step 1/1. Its pathway is purine metabolism; XMP biosynthesis via salvage pathway; XMP from xanthine: step 1/1. Purine salvage pathway enzyme that catalyzes the transfer of the ribosyl-5-phosphate group from 5-phospho-alpha-D-ribose 1-diphosphate (PRPP) to the N9 position of the 6-oxopurines guanine and xanthine to form the corresponding ribonucleotides GMP (guanosine 5'-monophosphate) and XMP (xanthosine 5'-monophosphate), with the release of PPi. To a lesser extent, also acts on hypoxanthine. The protein is Xanthine-guanine phosphoribosyltransferase of Oleidesulfovibrio alaskensis (strain ATCC BAA-1058 / DSM 17464 / G20) (Desulfovibrio alaskensis).